A 76-amino-acid chain; its full sequence is uncharacterized protein (76 aa).

This sequence to L.innocua lin1255, lin1742 and lin2600.

This is an uncharacterized protein from Listeria innocua serovar 6a (strain ATCC BAA-680 / CLIP 11262).